The following is a 423-amino-acid chain: p-aminobenzoyl-glutamate hydrolase subunit A homolog (423 aa).

It belongs to the peptidase M20 family. Mn(2+) serves as cofactor.

Functionally, catalyzes the cleavage of p-aminobenzoyl-glutamate (PABA-GLU) to form p-aminobenzoate (PABA) and glutamate. The polypeptide is p-aminobenzoyl-glutamate hydrolase subunit A homolog (abgA) (Haemophilus influenzae (strain ATCC 51907 / DSM 11121 / KW20 / Rd)).